The primary structure comprises 560 residues: Embryonal Fyn-associated substrate (560 aa).

The SH3 domain occupies Thr-5–Ala-68. Disordered regions lie at residues Val-176–Ala-219 and Ala-241–Glu-372. Positions Ala-198–Arg-210 are enriched in basic and acidic residues. A Phosphotyrosine; by SRC modification is found at Tyr-253. Over residues Gly-259–Pro-268 the composition is skewed to pro residues. 2 short sequence motifs (SH3-binding) span residues Arg-304–Pro-310 and Arg-334–Pro-340. The span at Pro-305–Pro-315 shows a compositional bias: low complexity. Positions Pro-351–Ala-361 are enriched in basic and acidic residues. Residues Phe-437 to Gly-487 form a divergent helix-loop-helix motif region.

It belongs to the CAS family. Post-translationally, phosphorylated on multiple tyrosine residues. Phosphorylated on tyrosines by FYN and SRC. Widely expressed. Higher levels found in placenta and embryo. Lower levels found in brain, brainstem, muscle and lung. No expression in liver and intestine.

Its function is as follows. Docking protein which plays a central coordinating role for tyrosine-kinase-based signaling related to cell adhesion. May serve as an activator of SRC and a downstream effector. Interacts with the SH3 domain of FYN and with CRK, SRC, and YES. The chain is Embryonal Fyn-associated substrate (Efs) from Mus musculus (Mouse).